Consider the following 104-residue polypeptide: Phosphoribosyl-ATP pyrophosphatase (104 aa).

This sequence belongs to the PRA-PH family.

The protein resides in the cytoplasm. The enzyme catalyses 1-(5-phospho-beta-D-ribosyl)-ATP + H2O = 1-(5-phospho-beta-D-ribosyl)-5'-AMP + diphosphate + H(+). It functions in the pathway amino-acid biosynthesis; L-histidine biosynthesis; L-histidine from 5-phospho-alpha-D-ribose 1-diphosphate: step 2/9. The polypeptide is Phosphoribosyl-ATP pyrophosphatase (Erythrobacter litoralis (strain HTCC2594)).